The sequence spans 573 residues: MISNFILFALFIVTIALITKPLGSYIFRVFNNERTYLDWLAKPFQRVYLLVLGESSKKEQTAKAYFFSLVSFSVMAFIFVLVILLLQGILPLNTQEIKGMSFPQALNTAVSFITNTNWQSYSGETGVSYFAQMLALAVQNFVSAAVGLCVAIALIRSVARHETATIGNFWNDLGKGVFWILLPISIVIAIVYIFQGVPQNVMAYLHVHTLAGTEQIISQGPIASQEAIKSLGTNGGGFFNANSAHPYENPTVITNYIQMVSIFAIAAALTYTFGKWVGNTKQGWLIFGVMLVLFIISLVVMTISELHGLDFLHSKDIQDIYGQVGHLSNMEGKESRFGVFYSTLYNTVSTSASDGGVNSVLDSYSPLAGMMAMLNMAIGEVIFGGVGAGFYGFFMFLMLAVFIGSLMIGRAPSFLGKRIEANDMKWTMFALLISPCCVLVFTGLAAVIPSVHQTLTNSGAHGFSEILYAYISGANNNGSAFAGLSANTNYLNITIALSMLIGRFGVIFAVIMLAGSLVKKKRSLQMSEISSLDTTSFIFAILVFFTILLIGGLTIFPALGLGPILDQLNLNFL.

The next 10 membrane-spanning stretches (helical) occupy residues 6–26, 66–86, 135–155, 177–197, 257–277, 283–303, 382–402, 428–448, 493–513, and 537–557; these read ILFA…GSYI, FFSL…ILLL, ALAV…IALI, VFWI…FQGV, IQMV…GKWV, GWLI…VMTI, IFGG…LAVF, MFAL…AAVI, ITIA…VIML, and FIFA…TIFP.

This sequence belongs to the KdpA family. As to quaternary structure, the system is composed of three essential subunits: KdpA, KdpB and KdpC.

The protein resides in the cell inner membrane. Part of the high-affinity ATP-driven potassium transport (or Kdp) system, which catalyzes the hydrolysis of ATP coupled with the electrogenic transport of potassium into the cytoplasm. This subunit binds the periplasmic potassium ions and delivers the ions to the membrane domain of KdpB through an intramembrane tunnel. This is Potassium-transporting ATPase potassium-binding subunit from Francisella tularensis subsp. mediasiatica (strain FSC147).